Reading from the N-terminus, the 113-residue chain is Ribonuclease P protein component (113 aa).

Belongs to the RnpA family. In terms of assembly, consists of a catalytic RNA component (M1 or rnpB) and a protein subunit.

It carries out the reaction Endonucleolytic cleavage of RNA, removing 5'-extranucleotides from tRNA precursor.. In terms of biological role, RNaseP catalyzes the removal of the 5'-leader sequence from pre-tRNA to produce the mature 5'-terminus. It can also cleave other RNA substrates such as 4.5S RNA. The protein component plays an auxiliary but essential role in vivo by binding to the 5'-leader sequence and broadening the substrate specificity of the ribozyme. This is Ribonuclease P protein component from Geotalea uraniireducens (strain Rf4) (Geobacter uraniireducens).